The chain runs to 324 residues: MKLLFMYLLPLLYIAPILLAVAFLTLIERKILGYMQHRKGPNVVGPFGLLQPIADGVKLFIKEPIRPSTSSQLLFILAPTLALALAMIMWTPFPLPIPYSNLNLSILFILAISSLTVYTILGSGWASNSKYALIGALRAVAQTISYEVTLALIILCSVLLAGGFTLSAFAISQEFTWFILPLWPMFLMWFVSTLAETNRAPFDLTEGESELVSGFNVEYAGGPFALFFLAEYANILMMNTLSTIIFLGSCMSSLTLTTSLLMTKASILSLCFLWVRASYPRFRYDQLMHLVWKNFLPLTLALVILYVSMPISLLFTPPLPWKRA.

A run of 8 helical transmembrane segments spans residues 3–23 (LLFM…AVAF), 73–93 (LLFI…WTPF), 106–126 (ILFI…SGWA), 151–171 (ALII…AFAI), 175–195 (FTWF…STLA), 226–246 (LFFL…TIIF), 255–275 (TLTT…FLWV), and 295–315 (FLPL…SLLF).

It belongs to the complex I subunit 1 family.

The protein resides in the mitochondrion inner membrane. The enzyme catalyses a ubiquinone + NADH + 5 H(+)(in) = a ubiquinol + NAD(+) + 4 H(+)(out). Core subunit of the mitochondrial membrane respiratory chain NADH dehydrogenase (Complex I) that is believed to belong to the minimal assembly required for catalysis. Complex I functions in the transfer of electrons from NADH to the respiratory chain. The immediate electron acceptor for the enzyme is believed to be ubiquinone. In Aquarana catesbeiana (American bullfrog), this protein is NADH-ubiquinone oxidoreductase chain 1 (MT-ND1).